Reading from the N-terminus, the 550-residue chain is Chaperonin GroEL 1 (550 aa).

ATP-binding positions include 29-32, 86-90, glycine 413, 477-479, and aspartate 493; these read TIGP, DGTTT, and NAA. The segment at 524–550 is disordered; that stretch reads AVSDGDHGHSHGHGHSHGHSHPQGPGF. Residues 533-543 show a composition bias toward basic residues; it reads SHGHGHSHGHS.

This sequence belongs to the chaperonin (HSP60) family. Forms a cylinder of 14 subunits composed of two heptameric rings stacked back-to-back. Interacts with the co-chaperonin GroES.

It is found in the cytoplasm. It carries out the reaction ATP + H2O + a folded polypeptide = ADP + phosphate + an unfolded polypeptide.. Together with its co-chaperonin GroES, plays an essential role in assisting protein folding. The GroEL-GroES system forms a nano-cage that allows encapsulation of the non-native substrate proteins and provides a physical environment optimized to promote and accelerate protein folding. The sequence is that of Chaperonin GroEL 1 from Frankia alni (strain DSM 45986 / CECT 9034 / ACN14a).